Here is a 219-residue protein sequence, read N- to C-terminus: MSGLFGPLSRPGPLPSAWLFLLLLGPSSVLGISFHLPVNSRKCLREEIHKDLLVTGAYEITDQSGGAGGLRTHLKITDSAGHILYAKEDATKGKFAFTTEDYDMFEVCFESKGTGRIPDQLVILDMKHGVEAKNYEEIAKVEKLKPLEVELRRLEDLSESIVNDFAYMKKREEEMRDTNESTNTRVLYFSIFSMFCLIGLATWQVFYLRRFFKAKKLIE.

An N-terminal signal peptide occupies residues Met-1 to Gly-31. The segment at Met-1 to Glu-142 is required for interaction with STX17. At Ile-32–Arg-185 the chain is on the lumenal side. The 153-residue stretch at Arg-41–Ser-193 folds into the GOLD domain. The tract at residues Leu-147–Thr-178 is required for TMED10 and TMED2 cis-Golgi network localization. Dimethylated arginine is present on residues Arg-171 and Arg-176. Asn-179 is a glycosylation site (N-linked (GlcNAc...) asparagine). The chain crosses the membrane as a helical span at residues Val-186–Phe-206. The tract at residues Gln-204–Glu-219 is interaction with COPG1. Topologically, residues Tyr-207–Glu-219 are cytoplasmic. Positions Tyr-207–Glu-219 are interaction with ARF1 and IL1B. Residues Phe-211–Phe-212 carry the COPII vesicle coat-binding motif. The short motif at Phe-211–Glu-219 is the COPI vesicle coat-binding element.

This sequence belongs to the EMP24/GP25L family. Predominantly dimeric and to a lesser extent monomeric in the ER. Monomer and dimer in ERGIC and cis-Golgi network. Forms homooligomer (via GOLD domain); the assembly is promoted by direct binding with leaderless cargos and may form a protein channel that facilitates cargo entry into the ERGIC. Forms heterooligomeric complexes with other members of the p24 family such as TMED2, TMED7 and TMED9. Interacts (via GOLD domain) with TMED2 (via GOLD domain); the complex is required for export of TMED10 from the ER to the cis-Golgi network; the complex is proposed to be involved in cis-Golgi network dynamics and / or biogenesis. Associates with the COPI vesicle coat subunits (coatomer). Tetramerization of the cytoplasmic domain at the Golgi membrane in vitro; the complex is proposed to interact with COPI coatomer and induce budding of the vesicles. Interacts with COPG1; the interaction involves TMED10 homodimer. Interacts with ARF1 (GDP-bound); the interaction probably involves a TMED10 oligomer. Interacts with SEC23A, SEC24B, SEC24C and SEC24D components of the coat protein complex II/COPII, indicative of an association of TMED10 with the COPII vesicle coat. Interacts with CD59. Interacts with MPPE1/PGAP5; the complex might recruit and sort GPI-anchored proteins to the ER-exit site, or the interaction might lead to recycling of PGAP5 between the ER and the Golgi. Interacts with F2LR1/PAR2. Interacts with KDELR2/ERD2; the interaction is disrupted by KDELR2 ligand. Found in a complex composed at least of SURF4, TMED2 and TMED10. Associates with the presenilin-dependent gamma-secretase complex. Interacts with STX17; the interaction is direct. Interacts with IL-1; the interaction is direct. Interacts with RAB21 (active GTP-bound form); the interaction is indirect and regulates TMED10 abundance and localization at the Golgi.

It localises to the endoplasmic reticulum membrane. The protein resides in the endoplasmic reticulum-Golgi intermediate compartment membrane. It is found in the golgi apparatus membrane. Its subcellular location is the golgi apparatus. The protein localises to the cis-Golgi network membrane. It localises to the trans-Golgi network membrane. The protein resides in the cytoplasmic vesicle. It is found in the secretory vesicle membrane. Its subcellular location is the cell membrane. The protein localises to the melanosome. Its function is as follows. Cargo receptor involved in protein vesicular trafficking and quality control in the endoplasmic reticulum (ER) and Golgi. The p24 protein family is a group of transmembrane proteins that bind coat protein complex I/COPI and coat protein complex II/COPII involved in vesicular trafficking between the membranes. Acts at the lumenal side for incorporation of secretory cargo molecules into transport vesicles and involved in vesicle coat formation at the cytoplasmic side. Mainly functions in the early secretory pathway and cycles between the ER, ER-Golgi intermediate compartment (ERGIC) and Golgi, mediating cargo transport through COPI and COPII-coated vesicles. In COPII vesicle-mediated anterograde transport, involved in the transport of GPI-anchored proteins by acting together with TMED2 as their cargo receptor; the function specifically implies SEC24C and SEC24D of the COPII vesicle coat and lipid raft-like microdomains of the ER. Recognizes GPI anchors structural remodeled in the ER by the GPI inositol-deacylase/PGAP1 and the metallophosphoesterase MPPE1/PGAP5. In COPI vesicle-mediated retrograde transport, involved in the biogenesis of COPI vesicles and vesicle coat recruitment. Involved in trafficking of amyloid beta A4 protein and soluble APP-beta release (independent from the modulation of gamma-secretase activity). Involved in the KDELR2-mediated retrograde transport of the toxin A subunit (CTX-A-K63)together with COPI and the COOH terminus of KDELR2. On Golgi membranes, acts as a primary receptor for ARF1-GDP, a GTP-binding protein involved in COPI-vesicle formation. Increases coatomer-dependent GTPase-activating activity of ARFGAP2 which mediates the hydrolysis of ARF1-bound GTP and therefore modulates protein trafficking from the Golgi apparatus. Involved in the exocytic trafficking of G protein-coupled receptors F2LR1/PAR2 (trypsin and tryspin-like enzyme receptor), OPRM1 (opioid receptor) and P2RY4 (UTD and UDP receptor) from the Golgi to the plasma membrane, thus contributing to receptor resensitization. In addition to its cargo receptor activity, may also act as a protein channel after oligomerization, facilitating the post-translational entry of leaderless cytoplasmic cargo into the ERGIC. Involved in the translocation into ERGIC, the vesicle entry and the secretion of leaderless cargos (lacking the secretion signal sequence), including the mature form of interleukin 1/IL-1 family members, the alpha-crystallin B chain HSPB5, the carbohydrate-binding proteins galectin-1/LGALS1 and galectin-3/LGALS3, the microtubule-associated protein Tau/MAPT, and the annexin A1/ANXA1; the translocation process is dependent on cargo protein unfolding and enhanced by chaperones HSP90AB1 and HSP90B1/GRP9. Could also associates with the presenilin-dependent gamma-secretase complex in order to regulate gamma-cleavages of the amyloid beta A4 protein to yield amyloid-beta 40/Abeta40. In Mus musculus (Mouse), this protein is Transmembrane emp24 domain-containing protein 10.